The chain runs to 213 residues: Pyrrolidone-carboxylate peptidase (213 aa).

Active-site residues include E78, C141, and H165.

It belongs to the peptidase C15 family. Homotetramer.

It is found in the cytoplasm. It catalyses the reaction Release of an N-terminal pyroglutamyl group from a polypeptide, the second amino acid generally not being Pro.. Functionally, removes 5-oxoproline from various penultimate amino acid residues except L-proline. The polypeptide is Pyrrolidone-carboxylate peptidase (Clostridium perfringens (strain 13 / Type A)).